The chain runs to 498 residues: Isocitrate dehydrogenase [NADP], mitochondrial (498 aa).

NADP(+) contacts are provided by residues 164–166 (TIT) and arginine 171. A substrate-binding site is contributed by threonine 166. Residues 183–189 (SPNGTIR), arginine 198, and arginine 221 each bind substrate. A Mn(2+)-binding site is contributed by aspartate 339. Residue lysine 347 participates in NADP(+) binding. Residue aspartate 362 coordinates Mn(2+). NADP(+) is bound by residues 397–402 (GTVTRH) and asparagine 415.

It belongs to the isocitrate and isopropylmalate dehydrogenases family. Mg(2+) is required as a cofactor. It depends on Mn(2+) as a cofactor.

It localises to the mitochondrion. The catalysed reaction is D-threo-isocitrate + NADP(+) = 2-oxoglutarate + CO2 + NADPH. The chain is Isocitrate dehydrogenase [NADP], mitochondrial (icdA) from Aspergillus niger.